Here is a 212-residue protein sequence, read N- to C-terminus: Glycerol-3-phosphate acyltransferase (212 aa).

The next 5 membrane-spanning stretches (helical) occupy residues 10 to 30, 90 to 110, 124 to 144, 150 to 170, and 171 to 191; these read FAAL…AVVV, GYGL…SLGF, FAVS…VAVV, LAAL…GGTI, and WPLN…LFYR.

This sequence belongs to the PlsY family. In terms of assembly, probably interacts with PlsX.

It localises to the cell inner membrane. It catalyses the reaction an acyl phosphate + sn-glycerol 3-phosphate = a 1-acyl-sn-glycero-3-phosphate + phosphate. Its pathway is lipid metabolism; phospholipid metabolism. Catalyzes the transfer of an acyl group from acyl-phosphate (acyl-PO(4)) to glycerol-3-phosphate (G3P) to form lysophosphatidic acid (LPA). This enzyme utilizes acyl-phosphate as fatty acyl donor, but not acyl-CoA or acyl-ACP. This Bordetella avium (strain 197N) protein is Glycerol-3-phosphate acyltransferase.